A 423-amino-acid polypeptide reads, in one-letter code: Imidazolonepropionase (423 aa).

Residues His78 and His80 each contribute to the Fe(3+) site. 2 residues coordinate Zn(2+): His78 and His80. Positions 87, 150, and 183 each coordinate 4-imidazolone-5-propanoate. Tyr150 serves as a coordination point for N-formimidoyl-L-glutamate. Residue His247 participates in Fe(3+) binding. A Zn(2+)-binding site is contributed by His247. A 4-imidazolone-5-propanoate-binding site is contributed by Glu250. Asp322 contributes to the Fe(3+) binding site. Position 322 (Asp322) interacts with Zn(2+). N-formimidoyl-L-glutamate is bound by residues Asn324 and Gly326. Ser327 is a binding site for 4-imidazolone-5-propanoate.

The protein belongs to the metallo-dependent hydrolases superfamily. HutI family. Zn(2+) is required as a cofactor. The cofactor is Fe(3+).

Its subcellular location is the cytoplasm. The enzyme catalyses 4-imidazolone-5-propanoate + H2O = N-formimidoyl-L-glutamate. Its pathway is amino-acid degradation; L-histidine degradation into L-glutamate; N-formimidoyl-L-glutamate from L-histidine: step 3/3. Its function is as follows. Catalyzes the hydrolytic cleavage of the carbon-nitrogen bond in imidazolone-5-propanoate to yield N-formimidoyl-L-glutamate. It is the third step in the universal histidine degradation pathway. The polypeptide is Imidazolonepropionase (Bacillus cytotoxicus (strain DSM 22905 / CIP 110041 / 391-98 / NVH 391-98)).